A 213-amino-acid polypeptide reads, in one-letter code: Small ribosomal subunit protein uS3 (213 aa).

Residues 38–106 (IRSYIKKLLY…EFSLEVTEVR (69 aa)) enclose the KH type-2 domain.

This sequence belongs to the universal ribosomal protein uS3 family. Part of the 30S ribosomal subunit. Forms a tight complex with proteins S10 and S14.

Functionally, binds the lower part of the 30S subunit head. Binds mRNA in the 70S ribosome, positioning it for translation. The chain is Small ribosomal subunit protein uS3 from Lawsonia intracellularis (strain PHE/MN1-00).